The following is a 605-amino-acid chain: MSSSTTVVDTIRNFCIIAHIDHGKSTLADRFLEATDTLLHNQATAQVLDDMDLERERGITIKSHAIQMRYTSADGEEYILNLIDTPGHVDFSYEVSRSLAACEGALLVVDATQGVEAQTIANLYLAVEAGLEILPVINKIDLPSSDVEGVSQQIIDLMGVDRSEILEVSAKAGIGVDALLEAIIKRVPAPVDQRSKPLRALIFDSVFDAYRGAIVYLRIVDGMLNKGDRVRFFANEKVFLADEIGTMGLKRQPVKTLGAGDVGYLICSIKDVRDAKVGDTVTLADAPAKERLSGYKDVKPMVFSGLYPVNSNEFEDLRESLEKLSLNDASLVYTPETSAALGFGFRCGFLGLLHMEIIQERLEREYQVNIITTVPNVEYRVISSEGGTHVVDNPSKMPDAGFIEKIEEPYVSVQIITLAEYIGNIMKLAMERRGEYKNTDYLDTTRVNLHFEFPLAEIVFDFHDKLKSVSKGYASMDYEYIGYRDSDLVKLDVLLNGESVDALSTIVHRSKAYEWGRRLCQKLKSIIPRQMYEVAIQAAIGSRVIARETISAMRKNVLAKCYGGDISRKRKLLEKQKEGKKRMKQVGRVEIPQEAFLAVLNMDDQ.

One can recognise a tr-type G domain in the interval 9 to 191 (DTIRNFCIIA…AIIKRVPAPV (183 aa)). Residues 21–26 (DHGKST) and 138–141 (NKID) each bind GTP.

The protein belongs to the TRAFAC class translation factor GTPase superfamily. Classic translation factor GTPase family. LepA subfamily.

The protein resides in the cell inner membrane. It catalyses the reaction GTP + H2O = GDP + phosphate + H(+). Functionally, required for accurate and efficient protein synthesis under certain stress conditions. May act as a fidelity factor of the translation reaction, by catalyzing a one-codon backward translocation of tRNAs on improperly translocated ribosomes. Back-translocation proceeds from a post-translocation (POST) complex to a pre-translocation (PRE) complex, thus giving elongation factor G a second chance to translocate the tRNAs correctly. Binds to ribosomes in a GTP-dependent manner. The sequence is that of Elongation factor 4 from Chlorobium phaeobacteroides (strain BS1).